The chain runs to 70 residues: Conotoxin Im11.11 (70 aa).

The N-terminal stretch at methionine 1–alanine 25 is a signal peptide. 4 cysteine pairs are disulfide-bonded: cysteine 26–cysteine 40, cysteine 33–cysteine 45, cysteine 39–cysteine 49, and cysteine 44–cysteine 53. Proline 56 is modified (proline amide). Positions threonine 60–arginine 70 are excised as a propeptide.

This sequence belongs to the conotoxin I2 superfamily. In terms of tissue distribution, expressed by the venom duct.

The protein resides in the secreted. Functionally, probable neurotoxin. The polypeptide is Conotoxin Im11.11 (Conus imperialis (Imperial cone)).